Here is a 144-residue protein sequence, read N- to C-terminus: Superoxide dismutase [Mn], mitochondrial (144 aa).

Positions 10, 58, and 143 each coordinate Mn(2+).

The protein belongs to the iron/manganese superoxide dismutase family. Homotetramer. Requires Mn(2+) as cofactor.

The protein localises to the mitochondrion matrix. It carries out the reaction 2 superoxide + 2 H(+) = H2O2 + O2. Destroys superoxide anion radicals which are normally produced within the cells and which are toxic to biological systems. The protein is Superoxide dismutase [Mn], mitochondrial of Apostichopus californicus (California sea cucumber).